We begin with the raw amino-acid sequence, 212 residues long: Pyridoxine/pyridoxamine 5'-phosphate oxidase (212 aa).

Substrate is bound by residues 8–11 and Lys-66; that span reads RREY. FMN-binding positions include 61-66, 76-77, Arg-82, Lys-83, and Gln-105; these read RIVLLK and FT. Tyr-123, Arg-127, and Ser-131 together coordinate substrate. FMN is bound by residues 140–141 and Trp-185; that span reads QS. Position 191–193 (191–193) interacts with substrate; it reads RLH. Arg-195 contacts FMN.

Belongs to the pyridoxamine 5'-phosphate oxidase family. Homodimer. FMN is required as a cofactor.

It carries out the reaction pyridoxamine 5'-phosphate + O2 + H2O = pyridoxal 5'-phosphate + H2O2 + NH4(+). The enzyme catalyses pyridoxine 5'-phosphate + O2 = pyridoxal 5'-phosphate + H2O2. It functions in the pathway cofactor metabolism; pyridoxal 5'-phosphate salvage; pyridoxal 5'-phosphate from pyridoxamine 5'-phosphate: step 1/1. Its pathway is cofactor metabolism; pyridoxal 5'-phosphate salvage; pyridoxal 5'-phosphate from pyridoxine 5'-phosphate: step 1/1. In terms of biological role, catalyzes the oxidation of either pyridoxine 5'-phosphate (PNP) or pyridoxamine 5'-phosphate (PMP) into pyridoxal 5'-phosphate (PLP). This is Pyridoxine/pyridoxamine 5'-phosphate oxidase from Shewanella sp. (strain W3-18-1).